A 160-amino-acid chain; its full sequence is Lipoprotein signal peptidase (160 aa).

A run of 3 helical transmembrane segments spans residues 5-25, 60-80, and 84-104; these read LVFF…KFII, IEWL…AFFI, and LPFL…AGTV. Catalysis depends on residues Asp-118 and Asp-132. Residues 128-148 traverse the membrane as a helical segment; it reads FNIADSCLTVGVIGLLLLYIV.

This sequence belongs to the peptidase A8 family.

It is found in the cell membrane. The catalysed reaction is Release of signal peptides from bacterial membrane prolipoproteins. Hydrolyzes -Xaa-Yaa-Zaa-|-(S,diacylglyceryl)Cys-, in which Xaa is hydrophobic (preferably Leu), and Yaa (Ala or Ser) and Zaa (Gly or Ala) have small, neutral side chains.. The protein operates within protein modification; lipoprotein biosynthesis (signal peptide cleavage). This protein specifically catalyzes the removal of signal peptides from prolipoproteins. The polypeptide is Lipoprotein signal peptidase (Dehalococcoides mccartyi (strain ATCC BAA-2100 / JCM 16839 / KCTC 5957 / BAV1)).